An 839-amino-acid chain; its full sequence is Flocculation protein FLO11 (839 aa).

The first 22 residues, 1–22 (MVSLRSIFTSSILAAGLTRAHG), serve as a signal peptide directing secretion. The Flo11 1 domain maps to 24-194 (SGKTCPTSEV…PKKCSSDCGV (171 aa)). Intrachain disulfides connect Cys-28-Cys-188, Cys-37-Cys-167, Cys-129-Cys-192, and Cys-143-Cys-152. Asn-79 carries N-linked (GlcNAc...) asparagine glycosylation. A disordered region spans residues 187 to 342 (KCSSDCGVEP…GPTCPTSEVS (156 aa)). The span at 198 to 317 (TSDEPEEPTT…EPTTSEEPEE (120 aa)) shows a compositional bias: acidic residues. Positions 332–502 (EGPTCPTSEV…PKKCSSNCGV (171 aa)) constitute a Flo11 2 domain. N-linked (GlcNAc...) asparagine glycosylation is present at Asn-387. The interval 496 to 606 (CSSNCGVEPT…LVPTTKTETD (111 aa)) is disordered. Positions 506–592 (TSDEPEEPTT…PTTSDEEPGT (87 aa)) are enriched in acidic residues. The span at 593–606 (TEEPLVPTTKTETD) shows a compositional bias: low complexity.

This sequence belongs to the flocculin family. Highly divergent.

Functionally, homophilic binding protein that enables kin discrimination in heterogeneous yeast populations by mediating homotypic cell-cell interactions during flocculation, a reversible and asexual process in which cells adhere to form aggregates (flocs). This Komagataella phaffii (strain GS115 / ATCC 20864) (Yeast) protein is Flocculation protein FLO11.